Reading from the N-terminus, the 199-residue chain is Holliday junction branch migration complex subunit RuvA (199 aa).

The interval 1–63 (MIGCLIGEVF…EDAQQLYGFS (63 aa)) is domain I. The domain II stretch occupies residues 64 to 142 (DAQEKTIFRT…TLAQGTSSAA (79 aa)). The tract at residues 143 to 150 (ALPQIQFV) is flexible linker. The domain III stretch occupies residues 150-199 (VSNSPVAEAEAALQSLGYKPLEAQKAVAAVKADYTESADIIRAALKSMMK).

This sequence belongs to the RuvA family. Homotetramer. Forms an RuvA(8)-RuvB(12)-Holliday junction (HJ) complex. HJ DNA is sandwiched between 2 RuvA tetramers; dsDNA enters through RuvA and exits via RuvB. An RuvB hexamer assembles on each DNA strand where it exits the tetramer. Each RuvB hexamer is contacted by two RuvA subunits (via domain III) on 2 adjacent RuvB subunits; this complex drives branch migration. In the full resolvosome a probable DNA-RuvA(4)-RuvB(12)-RuvC(2) complex forms which resolves the HJ.

The protein resides in the cytoplasm. In terms of biological role, the RuvA-RuvB-RuvC complex processes Holliday junction (HJ) DNA during genetic recombination and DNA repair, while the RuvA-RuvB complex plays an important role in the rescue of blocked DNA replication forks via replication fork reversal (RFR). RuvA specifically binds to HJ cruciform DNA, conferring on it an open structure. The RuvB hexamer acts as an ATP-dependent pump, pulling dsDNA into and through the RuvAB complex. HJ branch migration allows RuvC to scan DNA until it finds its consensus sequence, where it cleaves and resolves the cruciform DNA. This Acinetobacter baumannii (strain SDF) protein is Holliday junction branch migration complex subunit RuvA.